The chain runs to 150 residues: 3-dehydroquinate dehydratase (150 aa).

Tyr-25 functions as the Proton acceptor in the catalytic mechanism. Asn-76, His-82, and Asp-89 together coordinate substrate. His-102 acts as the Proton donor in catalysis. Substrate is bound by residues 103 to 104 (LS) and Arg-113.

This sequence belongs to the type-II 3-dehydroquinase family. In terms of assembly, homododecamer.

The catalysed reaction is 3-dehydroquinate = 3-dehydroshikimate + H2O. Its pathway is metabolic intermediate biosynthesis; chorismate biosynthesis; chorismate from D-erythrose 4-phosphate and phosphoenolpyruvate: step 3/7. In terms of biological role, catalyzes a trans-dehydration via an enolate intermediate. This Trichodesmium erythraeum (strain IMS101) protein is 3-dehydroquinate dehydratase.